Here is a 92-residue protein sequence, read N- to C-terminus: C-C motif chemokine 3 (92 aa).

Positions 1–23 (MKVSTTALAVLLCTMTLCNQVFS) are cleaved as a signal peptide. Intrachain disulfides connect cysteine 34–cysteine 57 and cysteine 35–cysteine 73.

Belongs to the intercrine beta (chemokine CC) family. Self-associates. Also heterodimer of MIP-1-alpha(4-69) and MIP-1-beta(3-69). Interacts with CCR1. In terms of tissue distribution, expressed in lung, spleen, and pancreas.

The protein resides in the secreted. Its function is as follows. Monokine with inflammatory and chemokinetic properties. Binds to CCR1, CCR4 and CCR5. One of the major HIV-suppressive factors produced by CD8+ T-cells. Recombinant MIP-1-alpha induces a dose-dependent inhibition of different strains of HIV-1, HIV-2, and simian immunodeficiency virus (SIV). In Mus musculus (Mouse), this protein is C-C motif chemokine 3 (Ccl3).